A 20-amino-acid polypeptide reads, in one-letter code: Large ribosomal subunit protein bL31 (20 aa).

Positions 16 and 18 each coordinate Zn(2+).

It belongs to the bacterial ribosomal protein bL31 family. Type A subfamily. As to quaternary structure, part of the 50S ribosomal subunit. Requires Zn(2+) as cofactor.

Binds the 23S rRNA. This chain is Large ribosomal subunit protein bL31 (rpmE), found in Ectopseudomonas mendocina (Pseudomonas mendocina).